The chain runs to 599 residues: MVLDNIRNFSIIAHIDHGKSTLADRLLEYTGALTEREMQNQVLDKMDLERERGITIKAQAVRLNYQANDGRQYILNLIDTPGHVDFTYEVSRSLSACEGALLVVDASQGVEAQTLANVYLALENDLDVFPVLNKIDLPAAEPERVKQEIEDIIGLDAHDAVLASAKEGIGTREILEEIVNKIPPPRGDAAKPLKALLFDSWYDQYQGVIVLVRILDGSVKKGDKIQLMSNRRNYEVLKVGVFSPAMCEVASLSAGEVGFIIGGIKDVQDAKVGDTITNLHNPCDAPLSGFKEVQPMVFSGLYPIDTSQYEQLRDALAKLKLNDSSFSYEPETSLALGFGFRCGFLGLLHMEIIQERLEREFNLDLITTAPTVVYKVHRLDGSIITIESANQLPPTQEIEFVEEPFILASIHVPNEFVGGILALCEEKRGVQREIKYLTPTRVMIVYELPLNEVVLDFYDRLKSITKGYASLDYEHLDYRRSNLERLNIMINGEVVDALSLIIHKEKAYYRGRDLVSKMKELIPRQMFEIAIQAAIGNKVIARETVKALRKDVLAKCYGGDITRKRKLLEKQKEGKKRMKNVGNVELPQEAFLAILKVEG.

A tr-type G domain is found at 4–186 (DNIRNFSIIA…EIVNKIPPPR (183 aa)). GTP contacts are provided by residues 16 to 21 (DHGKST) and 133 to 136 (NKID).

Belongs to the TRAFAC class translation factor GTPase superfamily. Classic translation factor GTPase family. LepA subfamily.

The protein localises to the cell inner membrane. The catalysed reaction is GTP + H2O = GDP + phosphate + H(+). Functionally, required for accurate and efficient protein synthesis under certain stress conditions. May act as a fidelity factor of the translation reaction, by catalyzing a one-codon backward translocation of tRNAs on improperly translocated ribosomes. Back-translocation proceeds from a post-translocation (POST) complex to a pre-translocation (PRE) complex, thus giving elongation factor G a second chance to translocate the tRNAs correctly. Binds to ribosomes in a GTP-dependent manner. The protein is Elongation factor 4 of Geotalea daltonii (strain DSM 22248 / JCM 15807 / FRC-32) (Geobacter daltonii).